The sequence spans 40 residues: Photosystem II reaction center protein J (40 aa).

A helical transmembrane segment spans residues 8–28; sequence IPLWIIGTVAGILVIGLVGIF.

This sequence belongs to the PsbJ family. PSII is composed of 1 copy each of membrane proteins PsbA, PsbB, PsbC, PsbD, PsbE, PsbF, PsbH, PsbI, PsbJ, PsbK, PsbL, PsbM, PsbT, PsbX, PsbY, PsbZ, Psb30/Ycf12, at least 3 peripheral proteins of the oxygen-evolving complex and a large number of cofactors. It forms dimeric complexes.

The protein localises to the plastid. It localises to the chloroplast thylakoid membrane. In terms of biological role, one of the components of the core complex of photosystem II (PSII). PSII is a light-driven water:plastoquinone oxidoreductase that uses light energy to abstract electrons from H(2)O, generating O(2) and a proton gradient subsequently used for ATP formation. It consists of a core antenna complex that captures photons, and an electron transfer chain that converts photonic excitation into a charge separation. In Spinacia oleracea (Spinach), this protein is Photosystem II reaction center protein J.